The following is a 425-amino-acid chain: Putative dipeptidase MGYG_00085 (425 aa).

A signal peptide spans 1-31; it reads MAPERRSRLSETAGLFVSLLALTSIVPVQAV. 3 residues coordinate Zn(2+): His-56, Asp-58, and Glu-168. A disulfide bridge links Cys-107 with Cys-197. His-195 is a substrate binding site. Residues His-239 and His-260 each contribute to the Zn(2+) site. Residues Arg-271 and Asp-331 each coordinate substrate. The N-linked (GlcNAc...) asparagine glycan is linked to Asn-403.

This sequence belongs to the metallo-dependent hydrolases superfamily. Peptidase M19 family. It depends on Zn(2+) as a cofactor.

The enzyme catalyses an L-aminoacyl-L-amino acid + H2O = 2 an L-alpha-amino acid. Functionally, hydrolyzes a wide range of dipeptides. The sequence is that of Putative dipeptidase MGYG_00085 from Arthroderma gypseum (strain ATCC MYA-4604 / CBS 118893) (Microsporum gypseum).